The chain runs to 294 residues: NAD kinase (294 aa).

Asp-74 acts as the Proton acceptor in catalysis. NAD(+) contacts are provided by residues 74-75, 148-149, His-159, Arg-176, Asp-178, 189-194, and Gln-249; these read DG, NE, and TAYSLS.

The protein belongs to the NAD kinase family. It depends on a divalent metal cation as a cofactor.

The protein resides in the cytoplasm. The enzyme catalyses NAD(+) + ATP = ADP + NADP(+) + H(+). Its function is as follows. Involved in the regulation of the intracellular balance of NAD and NADP, and is a key enzyme in the biosynthesis of NADP. Catalyzes specifically the phosphorylation on 2'-hydroxyl of the adenosine moiety of NAD to yield NADP. This chain is NAD kinase, found in Vibrio parahaemolyticus serotype O3:K6 (strain RIMD 2210633).